The primary structure comprises 501 residues: Aldehyde dehydrogenase mpl4 (501 aa).

Residue glycine 231–glycine 236 participates in NAD(+) binding. Residues glutamate 253 and cysteine 287 contribute to the active site.

The protein belongs to the aldehyde dehydrogenase family.

The catalysed reaction is an aldehyde + NAD(+) + H2O = a carboxylate + NADH + 2 H(+). The protein operates within mycotoxin biosynthesis. Functionally, aldehyde dehydrogenase; part of the gene cluster that mediates the biosynthesis of the mycotoxin citrinin, a hepato-nephrotoxic compound to humans due to inhibition of respiration complex III. The pathway begins with the synthesis of a keto-aldehyde intermediate by the citrinin PKS (pksCT) from successive condensations of 4 malonyl-CoA units, presumably with a simple acetyl-CoA starter unit. Release of the keto-aldehyde intermediate is consistent with the presence of the C-terminal reductive release domain. Mp11 collaborates with pksCT by catalyzing the hydrolysis of ACP-bound acyl intermediates to free the ACP from stalled intermediates. Mpl2 then catalyzes the oxidation of the C-12 methyl of the ketone intermediate to an alcohol intermediate which is further oxidized by the oxidoreductase mpl7 to produce a bisaldehyde intermediate. The fourth catalytic step is catalyzed by the mpl4 aldehyde dehydrogenase. The final transformation is the reduction of C-3 by mpl6 to provide the chemically stable citrinin nucleus. This is Aldehyde dehydrogenase mpl4 from Monascus purpureus (Red mold).